The sequence spans 412 residues: MSDKLILPSWLSRGIEEYFPIKGIDQTFSEIIDDAKKNNKKLRVKLGIDPTGTDIHLGHSILFKKLRAFQDNGHIAVLIIGDFTAQIGDPTGKNKTRVQLSEKQVKDNAKTYLTQLGMGKPANESILDFDSKDKIEIRYNSEWLKGLNLNSIIELMGSATVSQMLAKEEFNKRYNSQVPIALHEFLYPLLQGYDSVVVQSDIELGGTDQKFNIAIGRDLQRHFKQEPQFGVLLPILTGLDGIKKMSKSEFNTVGLTEDSLSMYSKLEKVPDNIIPTYFELLTELDLSVLNDANPRELQRRMALEVTTLFHGAEEASKAQSNCEKLFLGHKEKVGEIPEISLKDIVFPVKFFYLLSSLKLFKSSSESKRSIKGGGVKIDSQKVINPDIVFDSKKDLEGKILQIGKKIIKRFEN.

Residues 50–59 (PTGTDIHLGH) carry the 'HIGH' region motif. A 'KMSKS' region motif is present at residues 244–248 (KMSKS). Position 247 (Lys247) interacts with ATP. Residues 348 to 411 (VKFFYLLSSL…IGKKIIKRFE (64 aa)) form the S4 RNA-binding domain.

It belongs to the class-I aminoacyl-tRNA synthetase family. TyrS type 2 subfamily. As to quaternary structure, homodimer.

Its subcellular location is the cytoplasm. It catalyses the reaction tRNA(Tyr) + L-tyrosine + ATP = L-tyrosyl-tRNA(Tyr) + AMP + diphosphate + H(+). In terms of biological role, catalyzes the attachment of tyrosine to tRNA(Tyr) in a two-step reaction: tyrosine is first activated by ATP to form Tyr-AMP and then transferred to the acceptor end of tRNA(Tyr). The polypeptide is Tyrosine--tRNA ligase (Prochlorococcus marinus (strain MIT 9312)).